A 184-amino-acid polypeptide reads, in one-letter code: MPVMPDHWIREQAVSNGMIDPFVETQKRDGVISYGLSSYGYDARVADDFKIFTNVDSAVVDPKNFSSDSFVDRKGPVCIIPPNSFALAHTVEYFRIPRDVLVICLGKSTYARCGIIVNVTPLEPEWEGQVTIEISNTTPLPAKIYANEGICQFLFLQGSAPPETSYADKAGKYMRQRGVSLPRL.

DCTP is bound at residue 107–112; that stretch reads KSTYAR. The active-site Proton donor/acceptor is the Glu-133. Residues Gln-152, Tyr-166, and Gln-176 each contribute to the dCTP site.

Belongs to the dCTP deaminase family. Homotrimer.

It carries out the reaction dCTP + H2O + H(+) = dUTP + NH4(+). It participates in pyrimidine metabolism; dUMP biosynthesis; dUMP from dCTP (dUTP route): step 1/2. Its function is as follows. Catalyzes the deamination of dCTP to dUTP. This chain is dCTP deaminase, found in Acidiphilium cryptum (strain JF-5).